Here is a 360-residue protein sequence, read N- to C-terminus: S-adenosylmethionine:tRNA ribosyltransferase-isomerase (360 aa).

The protein belongs to the QueA family. In terms of assembly, monomer.

Its subcellular location is the cytoplasm. It catalyses the reaction 7-aminomethyl-7-carbaguanosine(34) in tRNA + S-adenosyl-L-methionine = epoxyqueuosine(34) in tRNA + adenine + L-methionine + 2 H(+). The protein operates within tRNA modification; tRNA-queuosine biosynthesis. Transfers and isomerizes the ribose moiety from AdoMet to the 7-aminomethyl group of 7-deazaguanine (preQ1-tRNA) to give epoxyqueuosine (oQ-tRNA). The sequence is that of S-adenosylmethionine:tRNA ribosyltransferase-isomerase from Rhodopseudomonas palustris (strain TIE-1).